Here is a 148-residue protein sequence, read N- to C-terminus: Small ribosomal subunit protein eS12B (148 aa).

The protein belongs to the eukaryotic ribosomal protein eS12 family. In terms of assembly, component of the small ribosomal subunit (SSU). Mature yeast ribosomes consist of a small (40S) and a large (60S) subunit. The 40S small subunit contains 1 molecule of ribosomal RNA (18S rRNA) and at least 33 different proteins. The large 60S subunit contains 3 rRNA molecules (25S, 5.8S and 5S rRNA) and at least 46 different proteins.

Its subcellular location is the cytoplasm. In terms of biological role, component of the ribosome, a large ribonucleoprotein complex responsible for the synthesis of proteins in the cell. The small ribosomal subunit (SSU) binds messenger RNAs (mRNAs) and translates the encoded message by selecting cognate aminoacyl-transfer RNA (tRNA) molecules. The large subunit (LSU) contains the ribosomal catalytic site termed the peptidyl transferase center (PTC), which catalyzes the formation of peptide bonds, thereby polymerizing the amino acids delivered by tRNAs into a polypeptide chain. The nascent polypeptides leave the ribosome through a tunnel in the LSU and interact with protein factors that function in enzymatic processing, targeting, and the membrane insertion of nascent chains at the exit of the ribosomal tunnel. In Schizosaccharomyces pombe (strain 972 / ATCC 24843) (Fission yeast), this protein is Small ribosomal subunit protein eS12B (rps1202).